A 90-amino-acid chain; its full sequence is Small ribosomal subunit protein bS20 (90 aa).

Belongs to the bacterial ribosomal protein bS20 family.

Its function is as follows. Binds directly to 16S ribosomal RNA. The protein is Small ribosomal subunit protein bS20 of Mesomycoplasma hyopneumoniae (strain J / ATCC 25934 / NCTC 10110) (Mycoplasma hyopneumoniae).